The following is a 518-amino-acid chain: Ent-cassadiene hydroxylase (518 aa).

A helical transmembrane segment spans residues 6-26; the sequence is LILALGLSVLFVLLSKLVSSA. Cys451 is a binding site for heme.

The protein belongs to the cytochrome P450 family. It depends on heme as a cofactor.

It localises to the membrane. The enzyme catalyses ent-cassa-12,15-diene + 3 reduced [NADPH--hemoprotein reductase] + 3 O2 = ent-3beta-hydroxycassa-12,15-dien-2-one + 3 oxidized [NADPH--hemoprotein reductase] + 4 H2O + 3 H(+). Its function is as follows. Enzyme of the diterpenoid metabolism involved in the biosynthesis of antibacterial oryzalides such as phytocassane. Catalyzes the hydroxylation of ent-cassa-12,15-diene to form ent-3beta-hydroxycassa-12,15-dien-2-one. This is Ent-cassadiene hydroxylase (CYP71Z7) from Oryza sativa subsp. japonica (Rice).